Here is a 90-residue protein sequence, read N- to C-terminus: Large ribosomal subunit protein bL27 (90 aa).

Residues 1–21 (MAHKKAGGSSRNGRDSHGKRL) are disordered.

Belongs to the bacterial ribosomal protein bL27 family.

The protein is Large ribosomal subunit protein bL27 of Nitrobacter winogradskyi (strain ATCC 25391 / DSM 10237 / CIP 104748 / NCIMB 11846 / Nb-255).